A 340-amino-acid polypeptide reads, in one-letter code: Putative UPF0607 protein ENSP00000332738 (340 aa).

The segment covering 75 to 90 (VRAEEPKEATEVKDQV) has biased composition (basic and acidic residues). 2 disordered regions span residues 75–130 (VRAE…NPRP) and 215–281 (GLLM…KLPC). Polar residues predominate over residues 91-126 (ETQGQEDNKTGPCSNGKAASTSRPLETQGNLTSSWY). The segment covering 228 to 241 (PAALRSSRSSPPRA) has biased composition (low complexity). Positions 242–251 (AGHRPRKRKL) are enriched in basic residues. The span at 254–266 (PPLQLQQTPPLQL) shows a compositional bias: low complexity.

The protein belongs to the UPF0607 family.

The protein is Putative UPF0607 protein ENSP00000332738 of Homo sapiens (Human).